A 558-amino-acid polypeptide reads, in one-letter code: Podocalyxin (558 aa).

An N-terminal signal peptide occupies residues 1-22; sequence MRCALALSALLLLLSTPPLLPS. Positions 20-29 are enriched in pro residues; that stretch reads LPSSPSPSPS. Disordered stretches follow at residues 20-50, 83-210, and 270-338; these read LPSS…PTPA, LGVS…DHLM, and SVIS…VAHE. At 23–461 the chain is on the extracellular side; that stretch reads SPSPSPSPSQ…EEAEDRFSMP (439 aa). Composition is skewed to polar residues over residues 32–50 and 83–107; these read QNAT…PTPA and LGVS…NTTV. 3 N-linked (GlcNAc...) asparagine glycosylation sites follow: Asn33, Asn43, and Asn104. A compositionally biased stretch (low complexity) spans 125–142; sequence STKSADTTTVATSTATAK. Polar residues-rich tracts occupy residues 143–173, 190–204, and 270–302; these read PNTT…LTST, RQPT…PTSS, and SVIS…TSPA. Asn144 carries N-linked (GlcNAc...) asparagine glycosylation. The segment covering 313–324 has biased composition (low complexity); sequence TMSSSPTAASTT. Asn360 is a glycosylation site (N-linked (GlcNAc...) asparagine). A helical transmembrane segment spans residues 462-482; the sequence is LIITIVCMASFLLLVAALYGC. Over 483-558 the chain is Cytoplasmic; that stretch reads CHQRLSQRKD…DLDEEEDTHL (76 aa). Thr518 carries the post-translational modification Phosphothreonine. A phosphoserine mark is found at Ser529 and Ser537. The residue at position 556 (Thr556) is a Phosphothreonine.

Belongs to the podocalyxin family. Monomer; when associated with the membrane raft. Oligomer; when integrated in the apical membrane. Interacts (via the C-terminal PDZ-binding motif DTHL) with NHERF1 (via the PDZ domains); the interaction is not detected in glomerular epithelium cells, take place early in the secretory pathway and is necessary for its apical membrane sorting. Found in a complex with EZR, PODXL and NHERF2. Associates with the actin cytoskeleton through complex formation with EZR and NHERF2. Interacts (via the C-terminal PDZ-binding motif DTHL) with NHERF2 (via the PDZ 1 domain); interaction is detected in glomerular epithelium cells. Interacts with EZR. N- and O-linked glycosylated. Sialoglycoprotein. As to expression, glomerular epithelium cell (podocyte).

It is found in the apical cell membrane. Its subcellular location is the cell projection. The protein resides in the lamellipodium. It localises to the filopodium. The protein localises to the ruffle. It is found in the microvillus. Its subcellular location is the membrane raft. The protein resides in the membrane. Its function is as follows. Involved in the regulation of both adhesion and cell morphology and cancer progression. Functions as an anti-adhesive molecule that maintains an open filtration pathway between neighboring foot processes in the podocyte by charge repulsion. Acts as a pro-adhesive molecule, enhancing the adherence of cells to immobilized ligands, increasing the rate of migration and cell-cell contacts in an integrin-dependent manner. Induces the formation of apical actin-dependent microvilli. Involved in the formation of a preapical plasma membrane subdomain to set up initial epithelial polarization and the apical lumen formation during renal tubulogenesis. Plays a role in cancer development and aggressiveness by inducing cell migration and invasion through its interaction with the actin-binding protein EZR. Affects EZR-dependent signaling events, leading to increased activities of the MAPK and PI3K pathways in cancer cells. The sequence is that of Podocalyxin (PODXL) from Homo sapiens (Human).